The sequence spans 171 residues: NADP-reducing hydrogenase subunit HndA (171 aa).

4 residues coordinate [2Fe-2S] cluster: cysteine 98, cysteine 103, cysteine 139, and cysteine 143.

The protein belongs to the complex I 24 kDa subunit family. In terms of assembly, heterotetramer composed of HndA, HndB, HndC and HndD subunits. HndA and HndB could form a heterodimeric intermediate in the electron transfer between the active site of hydrogenase subunit HndD and the NADP reduction site of the reducing subunit HndC. [2Fe-2S] cluster serves as cofactor.

It catalyses the reaction H2 + NADP(+) = NADPH + H(+). Its activity is regulated as follows. Inhibited by oxygen. Its function is as follows. Catalyzes the reduction of NADP in the presence of molecular H(2) to yield NADPH. The protein is NADP-reducing hydrogenase subunit HndA (hndA) of Solidesulfovibrio fructosivorans (Desulfovibrio fructosivorans).